The chain runs to 286 residues: tRNA (guanine-N(7)-)-methyltransferase (286 aa).

S-adenosyl-L-methionine contacts are provided by residues G103, 126 to 127 (EI), 161 to 162 (NA), and C181. Residue D184 is part of the active site. An S-adenosyl-L-methionine-binding site is contributed by 259 to 261 (TEE).

Belongs to the class I-like SAM-binding methyltransferase superfamily. TrmB family. In terms of assembly, forms a complex with TRM82.

The protein resides in the nucleus. The enzyme catalyses guanosine(46) in tRNA + S-adenosyl-L-methionine = N(7)-methylguanosine(46) in tRNA + S-adenosyl-L-homocysteine. It functions in the pathway tRNA modification; N(7)-methylguanine-tRNA biosynthesis. Catalyzes the formation of N(7)-methylguanine at position 46 (m7G46) in tRNA. This chain is tRNA (guanine-N(7)-)-methyltransferase, found in Vanderwaltozyma polyspora (strain ATCC 22028 / DSM 70294 / BCRC 21397 / CBS 2163 / NBRC 10782 / NRRL Y-8283 / UCD 57-17) (Kluyveromyces polysporus).